Consider the following 814-residue polypeptide: Tax1-binding protein 1 homolog (814 aa).

Ser124, Ser138, and Ser225 each carry phosphoserine. Residues 144 to 623 (TTKAGLLELK…KELTKSLEDQ (480 aa)) adopt a coiled-coil conformation. The segment at 320-420 (EEISKLQSCL…ELQLHAVKKD (101 aa)) is oligomerization. Phosphoserine; by IKKA is present on Ser619. A Phosphoserine modification is found at Ser632. At Ser693 the chain carries Phosphoserine; by IKKA. The tract at residues 701–733 (SQPARNLSRPDGLEDPEDSREDENVPIPPDPAN) is disordered. UBZ1-type zinc fingers lie at residues 752–778 (HKKC…VESH) and 779–805 (WKVC…VQTH). The Zn(2+) site is built by Cys755, Cys758, His774, His778, Cys782, Cys785, His801, and His805.

As to quaternary structure, homooligomer. Interacts with TNFAIP3. Interacts with STARD13. Interacts with MYO6. Interacts with TOM1; the interaction is indirect and is mediated by MYO6, which acts as a bridge between TOM1 and TAX1BP1. Interacts with MAVS; this interaction induces MAVS polyubiquitination. Interacts with TNIP1. Interacts with TRAF6; this interaction mediates deubiquitination of TRAF6 and inhibition of NF-kappa-B activation. Interacts with RIPK1; this interaction negatively regulates RIPK1 ubiquitination. Interacts with NBR1. Interacts with TBK1. Interacts with RB1CC1. Interacts with SQSTM1. Interacts with AZI2. Interacts with TICAM1 and TRIM32; these interactions target TICAM1 to TAX1BP1-mediated selective autophagic degradation. Post-translationally, phosphorylated in the C-terminal region by CHUK/IKKA leading to NF-kappa-B signaling down-regulation.

It localises to the cytoplasm. The protein resides in the mitochondrion. Its subcellular location is the preautophagosomal structure. The protein localises to the cytoplasmic vesicle. It is found in the autophagosome. Functionally, ubiquitin-binding adapter that participates in inflammatory, antiviral and innate immune processes as well as selective autophagy regulation. Plays a key role in the negative regulation of NF-kappa-B and IRF3 signalings by acting as an adapter for the ubiquitin-editing enzyme A20/TNFAIP3 to bind and inactivate its substrates. Disrupts the interactions between the E3 ubiquitin ligase TRAF3 and TBK1/IKBKE to attenuate 'Lys63'-linked polyubiquitination of TBK1 and thereby IFN-beta production. Also recruits A20/TNFAIP3 to ubiquitinated signaling proteins TRAF6 and RIPK1, leading to their deubiquitination and disruption of IL-1 and TNF-induced NF-kappa-B signaling pathways. Inhibits virus-induced apoptosis by inducing the 'Lys-48'-linked polyubiquitination and degradation of MAVS via recruitment of the E3 ligase ITCH, thereby attenuating MAVS-mediated apoptosis signaling. As a macroautophagy/autophagy receptor, facilitates the xenophagic clearance of pathogenic bacteria such as Salmonella typhimurium and Mycobacterium tuberculosis. Upon NBR1 recruitment to the SQSTM1-ubiquitin condensates, acts as the major recruiter of RB1CC1 to these ubiquitin condensates to promote their autophagic degradation. Mediates the autophagic degradation of other substrates including TICAM1. This chain is Tax1-binding protein 1 homolog (Tax1bp1), found in Mus musculus (Mouse).